The sequence spans 35 residues: Tamulustoxin-2 (35 aa).

3 disulfide bridges follow: Cys-2-Cys-22, Cys-7-Cys-31, and Cys-11-Cys-33.

The protein belongs to the short scorpion toxin superfamily. Potassium channel inhibitor family. Expressed by the venom gland.

Its subcellular location is the secreted. Blocks Kv1.6/KCNA6 potassium channels. This Hottentotta tamulus (Eastern Indian scorpion) protein is Tamulustoxin-2.